Here is a 458-residue protein sequence, read N- to C-terminus: tRNA-2-methylthio-N(6)-dimethylallyladenosine synthase (458 aa).

Residues 3–120 form the MTTase N-terminal domain; it reads QKLYIETFGC…LPSMLEQVRC (118 aa). [4Fe-4S] cluster contacts are provided by C12, C49, C83, C157, C161, and C164. Residues 143-375 form the Radical SAM core domain; sequence RADGPKAFVS…QAKIADNAAK (233 aa). Positions 378 to 441 constitute a TRAM domain; the sequence is ASMVGSIQSV…PNSLRGRLIG (64 aa).

This sequence belongs to the methylthiotransferase family. MiaB subfamily. As to quaternary structure, monomer. It depends on [4Fe-4S] cluster as a cofactor.

It is found in the cytoplasm. The catalysed reaction is N(6)-dimethylallyladenosine(37) in tRNA + (sulfur carrier)-SH + AH2 + 2 S-adenosyl-L-methionine = 2-methylsulfanyl-N(6)-dimethylallyladenosine(37) in tRNA + (sulfur carrier)-H + 5'-deoxyadenosine + L-methionine + A + S-adenosyl-L-homocysteine + 2 H(+). Catalyzes the methylthiolation of N6-(dimethylallyl)adenosine (i(6)A), leading to the formation of 2-methylthio-N6-(dimethylallyl)adenosine (ms(2)i(6)A) at position 37 in tRNAs that read codons beginning with uridine. The sequence is that of tRNA-2-methylthio-N(6)-dimethylallyladenosine synthase from Methylococcus capsulatus (strain ATCC 33009 / NCIMB 11132 / Bath).